The following is a 206-amino-acid chain: GTP cyclohydrolase 1 (206 aa).

Residues cysteine 95, histidine 98, and cysteine 166 each contribute to the Zn(2+) site.

The protein belongs to the GTP cyclohydrolase I family. In terms of assembly, toroid-shaped homodecamer, composed of two pentamers of five dimers.

The enzyme catalyses GTP + H2O = 7,8-dihydroneopterin 3'-triphosphate + formate + H(+). Its pathway is cofactor biosynthesis; 7,8-dihydroneopterin triphosphate biosynthesis; 7,8-dihydroneopterin triphosphate from GTP: step 1/1. This chain is GTP cyclohydrolase 1, found in Bartonella henselae (strain ATCC 49882 / DSM 28221 / CCUG 30454 / Houston 1) (Rochalimaea henselae).